The primary structure comprises 438 residues: MVDYQGKKVVIIGLGLTGLSCVDFFLARGVVPRVVDTRISPPGLDKLPEQVERHLGSLNEDWLMSADLIVASPGVALATPILCDAADAGIEIVGDIELFCREAQAPIVAITGSNGKSTVTTLVGEMARAAGWQVGVGGNIGLPALQLLEHPAQLYVLELSSFQLETTTSLHAAAATILNVTEDHTNRYPFGLQQYRAAKLHIYEHADLCVVNADDALTMPVRGADARCRSFGVDVGDYHLNRQQGETWLRVDGERVLNTREIKLVGQHNYTNALAALALADAVKIPRASALTALTSFTGLPHRFQMAFERNGVRWINDSKATNVGSTEAALSGLAVDGTLHLLLGGDGKSADFSPLVPYLQGERIRLYCFGRDGQQLAALRPEIAEQTETMEQAMRVIAERIRPGDMVLLSPACASLDQFRSFEQRGDEFARLAEELG.

112 to 118 (GSNGKST) is a binding site for ATP.

It belongs to the MurCDEF family.

The protein localises to the cytoplasm. It carries out the reaction UDP-N-acetyl-alpha-D-muramoyl-L-alanine + D-glutamate + ATP = UDP-N-acetyl-alpha-D-muramoyl-L-alanyl-D-glutamate + ADP + phosphate + H(+). The protein operates within cell wall biogenesis; peptidoglycan biosynthesis. Cell wall formation. Catalyzes the addition of glutamate to the nucleotide precursor UDP-N-acetylmuramoyl-L-alanine (UMA). This chain is UDP-N-acetylmuramoylalanine--D-glutamate ligase, found in Pectobacterium atrosepticum (strain SCRI 1043 / ATCC BAA-672) (Erwinia carotovora subsp. atroseptica).